The chain runs to 346 residues: Sesquiterpene synthase Agr1 (346 aa).

D98, N234, S238, and E242 together coordinate Mg(2+). The DDXXD motif motif lies at 98–102; that stretch reads DNLSD. R322 and Y323 together coordinate (2E,6E)-farnesyl diphosphate.

Belongs to the terpene synthase family. Mg(2+) serves as cofactor.

The catalysed reaction is (2E,6E)-farnesyl diphosphate = delta-cadinene + diphosphate. It carries out the reaction (2E,6E)-farnesyl diphosphate = alpha-muurolene + diphosphate. The enzyme catalyses (2E,6E)-farnesyl diphosphate = gamma-muurolene + diphosphate. It catalyses the reaction (2E,6E)-farnesyl diphosphate = alpha-selinene + diphosphate. Terpene cyclase that catalyzes the cyclization of farnesyl diphosphate (FPP) to various sesquiterpenes, including alpha-muurolene, gamma-muurolene, alpha-selinene, beta-selinene, delta-cadinene, alpha-cadinol and delta-cadinol. Delta-cadinene is the major product of Agr1. This Cyclocybe aegerita (Black poplar mushroom) protein is Sesquiterpene synthase Agr1.